The sequence spans 424 residues: Tyrosine--tRNA ligase (424 aa).

An L-tyrosine-binding site is contributed by tyrosine 36. The 'HIGH' region motif lies at 41–50 (PTAPSLHAGH). Tyrosine 171 and glutamine 175 together coordinate L-tyrosine. Positions 231–235 (KFGKS) match the 'KMSKS' region motif. An ATP-binding site is contributed by lysine 234. The 58-residue stretch at 356–413 (DGIVDLLVASGLSASKGAARRTIHEGGVSVNNIRVDNEEWVPQSSDFLHGRWLVLRRG) folds into the S4 RNA-binding domain.

This sequence belongs to the class-I aminoacyl-tRNA synthetase family. TyrS type 1 subfamily. In terms of assembly, homodimer.

It is found in the cytoplasm. It carries out the reaction tRNA(Tyr) + L-tyrosine + ATP = L-tyrosyl-tRNA(Tyr) + AMP + diphosphate + H(+). Functionally, catalyzes the attachment of tyrosine to tRNA(Tyr) in a two-step reaction: tyrosine is first activated by ATP to form Tyr-AMP and then transferred to the acceptor end of tRNA(Tyr). In Mycobacterium bovis (strain ATCC BAA-935 / AF2122/97), this protein is Tyrosine--tRNA ligase.